The sequence spans 124 residues: Small ribosomal subunit protein bS6 (124 aa).

The tract at residues 99-124 (PLPAPRVMPGSEAAQQQQAEAAASAD) is disordered. Positions 109–124 (SEAAQQQQAEAAASAD) are enriched in low complexity.

Belongs to the bacterial ribosomal protein bS6 family.

Binds together with bS18 to 16S ribosomal RNA. The sequence is that of Small ribosomal subunit protein bS6 from Synechococcus sp. (strain CC9605).